A 678-amino-acid polypeptide reads, in one-letter code: DNA ligase (678 aa).

NAD(+)-binding positions include 47–51, 96–97, and Glu122; these read DSDYD and SL. The active-site N6-AMP-lysine intermediate is Lys124. NAD(+)-binding residues include Arg145, Glu182, Lys300, and Lys324. Residues Cys418, Cys421, Cys436, and Cys442 each contribute to the Zn(2+) site. Residues 602–678 form the BRCT domain; that stretch reads AYNESFTGKT…ILEDNLKDLL (77 aa).

This sequence belongs to the NAD-dependent DNA ligase family. LigA subfamily. Mg(2+) is required as a cofactor. The cofactor is Mn(2+).

It catalyses the reaction NAD(+) + (deoxyribonucleotide)n-3'-hydroxyl + 5'-phospho-(deoxyribonucleotide)m = (deoxyribonucleotide)n+m + AMP + beta-nicotinamide D-nucleotide.. Its function is as follows. DNA ligase that catalyzes the formation of phosphodiester linkages between 5'-phosphoryl and 3'-hydroxyl groups in double-stranded DNA using NAD as a coenzyme and as the energy source for the reaction. It is essential for DNA replication and repair of damaged DNA. The protein is DNA ligase of Francisella tularensis subsp. holarctica (strain OSU18).